We begin with the raw amino-acid sequence, 132 residues long: Small ribosomal subunit protein uS9 (132 aa).

The protein belongs to the universal ribosomal protein uS9 family.

The chain is Small ribosomal subunit protein uS9 from Baumannia cicadellinicola subsp. Homalodisca coagulata.